We begin with the raw amino-acid sequence, 159 residues long: Small ribosomal subunit protein uS17 (159 aa).

It belongs to the universal ribosomal protein uS17 family.

The protein resides in the cytoplasm. This is Small ribosomal subunit protein uS17 (RPS11) from Zea mays (Maize).